Here is a 354-residue protein sequence, read N- to C-terminus: Ornithine carbamoyltransferase, catabolic (354 aa).

Carbamoyl phosphate is bound by residues 67–70 (STRT), Gln-94, Arg-118, and 145–148 (HPTQ). L-ornithine-binding positions include Asn-177, Asp-241, and 245–246 (SM). Residues 284-285 (CL) and Arg-329 contribute to the carbamoyl phosphate site.

This sequence belongs to the aspartate/ornithine carbamoyltransferase superfamily. OTCase family.

It localises to the cytoplasm. It carries out the reaction carbamoyl phosphate + L-ornithine = L-citrulline + phosphate + H(+). It functions in the pathway amino-acid degradation; L-arginine degradation via ADI pathway; carbamoyl phosphate from L-arginine: step 2/2. Its function is as follows. Reversibly catalyzes the transfer of the carbamoyl group from carbamoyl phosphate (CP) to the N(epsilon) atom of ornithine (ORN) to produce L-citrulline. This is Ornithine carbamoyltransferase, catabolic (arcB) from Lactococcus lactis subsp. cremoris (Streptococcus cremoris).